The sequence spans 326 residues: Target of rapamycin complex subunit LST8 (326 aa).

M1 is modified (N-acetylmethionine). WD repeat units follow at residues 1–37, 40–80, 83–122, 126–165, and 168–207; these read MNTS…CTRT, HQDS…PIIS, GVNK…LQCQ, QVNA…NEQL, and EPEV…GDEV. T51 carries the phosphothreonine modification. K86 participates in a covalent cross-link: Glycyl lysine isopeptide (Lys-Gly) (interchain with G-Cter in SUMO3). Glycyl lysine isopeptide (Lys-Gly) (interchain with G-Cter in SUMO3) cross-links involve residues K215, K245, and K261. The WD 6 repeat unit spans residues 218 to 257; that stretch reads AHTRYALQCRFSPDSTLLATCSADQTCKIWRTSNFSLMTE. The WD 7 repeat unit spans residues 268-309; it reads SSRGWMWGCAFSGDSQYIVTASSDNLARLWCVETGEIKREYG. K305 is covalently cross-linked (Glycyl lysine isopeptide (Lys-Gly) (interchain with G-Cter in SUMO3); alternate). Glycyl lysine isopeptide (Lys-Gly) (interchain with G-Cter in ubiquitin); alternate cross-links involve residues K305 and K313. A Glycyl lysine isopeptide (Lys-Gly) (interchain with G-Cter in SUMO1); alternate cross-link involves residue K313.

The protein belongs to the WD repeat LST8 family. Part of the mechanistic target of rapamycin complex 1 (mTORC1) which contains MTOR, MLST8 and RPTOR. mTORC1 associates with AKT1S1/PRAS40, which inhibits its activity. mTORC1 binds to and is inhibited by FKBP12-rapamycin. Within mTORC1, interacts directly with MTOR and RPTOR. Component of the mechanistic target of rapamycin complex 2 (mTORC2), consisting in two heterotretramers composed of MTOR, MLST8, RICTOR and MAPKAP1/SIN1. Contrary to mTORC1, mTORC2 does not bind to and is not sensitive to FKBP12-rapamycin. mTORC1 and mTORC2 associate with DEPTOR, which regulates their activity. Interacts with RHEB. Interacts with MEAK7. Interacts with SIK3. Interacts with SLC38A7; this interaction promotes the recruitment of mTORC1 to the lysosome and its subsequent activation. In terms of processing, phosphorylation at Thr-51 by CDK1 promotes ubiquitination by the SCF(FBXW7) complex, followed by degradation. Ubiquitination by the SCF(FBXW7) and SCF(FBXW11) complexes following phosphorylation at Thr-51 by CDK1, leads to its degradation by the proteasome. Ubiquitination at Lys-305 and Lys-313 by TRAF2 via 'Lys-63'-linked polyubiquitin chains inhibits formation of the mTORC2 complex, while promoting formation of the mTORC1 complex: ubiquitination disrupts the interaction between MLST8 and MAPKAP1/SIN1 to favor mTORC1 assembly. Deubiquitination at Lys-305 and Lys-313 by OTUD7B promotes MLST8 interaction with MAPKAP1/SIN1, facilitating mTORC2 assembly. Post-translationally, sumoylation with SUMO1, SUMO2 and SUMO3 promotes assembly of both mTORC1 and mTORC2 complexes.

Its subcellular location is the lysosome membrane. It localises to the cytoplasm. In terms of biological role, subunit of both mTORC1 and mTORC2, which regulates cell growth and survival in response to nutrient and hormonal signals. mTORC1 is activated in response to growth factors or amino acids. In response to nutrients, mTORC1 is recruited to the lysosome membrane and promotes protein, lipid and nucleotide synthesis by phosphorylating several substrates, such as ribosomal protein S6 kinase (RPS6KB1 and RPS6KB2) and EIF4EBP1 (4E-BP1). In the same time, it inhibits catabolic pathways by phosphorylating the autophagy initiation components ULK1 and ATG13, as well as transcription factor TFEB, a master regulators of lysosomal biogenesis and autophagy. The mTORC1 complex is inhibited in response to starvation and amino acid depletion. Within mTORC1, MLST8 interacts directly with MTOR and enhances its kinase activity. In nutrient-poor conditions, stabilizes the MTOR-RPTOR interaction and favors RPTOR-mediated inhibition of MTOR activity. As part of the mTORC2 complex, transduces signals from growth factors to pathways involved in proliferation, cytoskeletal organization, lipogenesis and anabolic output. mTORC2 is also activated by growth factors, but seems to be nutrient-insensitive. In response to growth factors, mTORC2 phosphorylates and activates AGC protein kinase family members, including AKT (AKT1, AKT2 and AKT3), PKC (PRKCA, PRKCB and PRKCE) and SGK1. mTORC2 functions upstream of Rho GTPases to regulate the actin cytoskeleton, probably by activating one or more Rho-type guanine nucleotide exchange factors. mTORC2 promotes the serum-induced formation of stress-fibers or F-actin. mTORC2 plays a critical role in AKT1 activation by mediating phosphorylation of different sites depending on the context, such as 'Thr-450', 'Ser-473', 'Ser-477' or 'Thr-479', facilitating the phosphorylation of the activation loop of AKT1 on 'Thr-308' by PDPK1/PDK1 which is a prerequisite for full activation. mTORC2 regulates the phosphorylation of SGK1 at 'Ser-422'. mTORC2 also modulates the phosphorylation of PRKCA on 'Ser-657'. Within mTORC2, MLST8 acts as a bridge between MAPKAP1/SIN1 and MTOR. In Bos taurus (Bovine), this protein is Target of rapamycin complex subunit LST8.